The sequence spans 381 residues: Pyrimidine monooxygenase RutA (381 aa).

FMN is bound by residues isoleucine 66–lysine 67, asparagine 132, glutamate 141, arginine 157–tyrosine 158, and serine 207.

It belongs to the NtaA/SnaA/DszA monooxygenase family. RutA subfamily.

It catalyses the reaction uracil + FMNH2 + NADH + O2 = (Z)-3-ureidoacrylate + FMN + NAD(+) + H2O + H(+). It carries out the reaction thymine + FMNH2 + NADH + O2 = (Z)-2-methylureidoacrylate + FMN + NAD(+) + H2O + H(+). Catalyzes the pyrimidine ring opening between N-3 and C-4 by an unusual flavin hydroperoxide-catalyzed mechanism, adding oxygen atoms in the process to yield ureidoacrylate peracid, that immediately reacts with FMN forming ureidoacrylate and FMN-N(5)-oxide. The FMN-N(5)-oxide reacts spontaneously with NADH to produce FMN. Requires the flavin reductase RutF to regenerate FMN in vivo. The sequence is that of Pyrimidine monooxygenase RutA from Methylobacterium radiotolerans (strain ATCC 27329 / DSM 1819 / JCM 2831 / NBRC 15690 / NCIMB 10815 / 0-1).